Consider the following 132-residue polypeptide: S-adenosylmethionine decarboxylase proenzyme (132 aa).

The active-site Schiff-base intermediate with substrate; via pyruvic acid is the serine 65. Serine 65 bears the Pyruvic acid (Ser); by autocatalysis mark. Catalysis depends on histidine 70, which acts as the Proton acceptor; for processing activity. Cysteine 85 functions as the Proton donor; for catalytic activity in the catalytic mechanism.

Belongs to the prokaryotic AdoMetDC family. Type 1 subfamily. Heterotetramer of two alpha and two beta chains arranged as a dimer of alpha/beta heterodimers. It depends on pyruvate as a cofactor. Post-translationally, is synthesized initially as an inactive proenzyme. Formation of the active enzyme involves a self-maturation process in which the active site pyruvoyl group is generated from an internal serine residue via an autocatalytic post-translational modification. Two non-identical subunits are generated from the proenzyme in this reaction, and the pyruvate is formed at the N-terminus of the alpha chain, which is derived from the carboxyl end of the proenzyme. The post-translation cleavage follows an unusual pathway, termed non-hydrolytic serinolysis, in which the side chain hydroxyl group of the serine supplies its oxygen atom to form the C-terminus of the beta chain, while the remainder of the serine residue undergoes an oxidative deamination to produce ammonia and the pyruvoyl group blocking the N-terminus of the alpha chain.

The catalysed reaction is S-adenosyl-L-methionine + H(+) = S-adenosyl 3-(methylsulfanyl)propylamine + CO2. It functions in the pathway amine and polyamine biosynthesis; S-adenosylmethioninamine biosynthesis; S-adenosylmethioninamine from S-adenosyl-L-methionine: step 1/1. Catalyzes the decarboxylation of S-adenosylmethionine to S-adenosylmethioninamine (dcAdoMet), the propylamine donor required for the synthesis of the polyamines spermine and spermidine from the diamine putrescine. The chain is S-adenosylmethionine decarboxylase proenzyme from Symbiobacterium thermophilum (strain DSM 24528 / JCM 14929 / IAM 14863 / T).